Reading from the N-terminus, the 98-residue chain is NADH-ubiquinone oxidoreductase chain 4L (98 aa).

Transmembrane regions (helical) follow at residues 2–22 (PFIYINILLALTTALLGLLLF), 30–50 (LLCLEGLMLSLFIMSALTTLG), and 61–81 (IILMVFAACETALGLALLVTI).

Belongs to the complex I subunit 4L family. As to quaternary structure, core subunit of respiratory chain NADH dehydrogenase (Complex I) which is composed of 45 different subunits.

The protein resides in the mitochondrion inner membrane. It carries out the reaction a ubiquinone + NADH + 5 H(+)(in) = a ubiquinol + NAD(+) + 4 H(+)(out). Its function is as follows. Core subunit of the mitochondrial membrane respiratory chain NADH dehydrogenase (Complex I) which catalyzes electron transfer from NADH through the respiratory chain, using ubiquinone as an electron acceptor. Part of the enzyme membrane arm which is embedded in the lipid bilayer and involved in proton translocation. The sequence is that of NADH-ubiquinone oxidoreductase chain 4L (MT-ND4L) from Bradypus tridactylus (Pale-throated three-toed sloth).